A 40-amino-acid polypeptide reads, in one-letter code: uncharacterized protein (40 aa).

This is an uncharacterized protein from Sulfolobus acidocaldarius (strain ATCC 33909 / DSM 639 / JCM 8929 / NBRC 15157 / NCIMB 11770).